The following is an 88-amino-acid chain: Exodeoxyribonuclease 7 small subunit (88 aa).

The tract at residues 68–88 (SDPMHPDDGEPFDPSLVSTSQ) is disordered.

This sequence belongs to the XseB family. Heterooligomer composed of large and small subunits.

The protein localises to the cytoplasm. The catalysed reaction is Exonucleolytic cleavage in either 5'- to 3'- or 3'- to 5'-direction to yield nucleoside 5'-phosphates.. In terms of biological role, bidirectionally degrades single-stranded DNA into large acid-insoluble oligonucleotides, which are then degraded further into small acid-soluble oligonucleotides. In Xylella fastidiosa (strain 9a5c), this protein is Exodeoxyribonuclease 7 small subunit.